We begin with the raw amino-acid sequence, 512 residues long: Lysine--tRNA ligase (512 aa).

Residues E421 and E428 each coordinate Mg(2+).

It belongs to the class-II aminoacyl-tRNA synthetase family. In terms of assembly, homodimer. It depends on Mg(2+) as a cofactor.

The protein localises to the cytoplasm. The enzyme catalyses tRNA(Lys) + L-lysine + ATP = L-lysyl-tRNA(Lys) + AMP + diphosphate. This chain is Lysine--tRNA ligase, found in Aeromonas salmonicida (strain A449).